Reading from the N-terminus, the 380-residue chain is 3-dehydroquinate synthase (380 aa).

NAD(+) contacts are provided by residues 100 to 104, 124 to 125, Lys-137, and Lys-146; these read GAASD and TT. Zn(2+) is bound by residues Glu-179, His-251, and His-267.

It belongs to the sugar phosphate cyclases superfamily. Dehydroquinate synthase family. Requires NAD(+) as cofactor. The cofactor is Co(2+). Zn(2+) serves as cofactor.

Its subcellular location is the cytoplasm. The catalysed reaction is 7-phospho-2-dehydro-3-deoxy-D-arabino-heptonate = 3-dehydroquinate + phosphate. It participates in metabolic intermediate biosynthesis; chorismate biosynthesis; chorismate from D-erythrose 4-phosphate and phosphoenolpyruvate: step 2/7. Its function is as follows. Catalyzes the conversion of 3-deoxy-D-arabino-heptulosonate 7-phosphate (DAHP) to dehydroquinate (DHQ). This Tropheryma whipplei (strain TW08/27) (Whipple's bacillus) protein is 3-dehydroquinate synthase.